Consider the following 288-residue polypeptide: Diaminopimelate epimerase (288 aa).

The substrate site is built by asparagine 14 and asparagine 67. The active-site Proton donor is the cysteine 76. Substrate is bound by residues 77–78 (GN), asparagine 166, asparagine 199, and 217–218 (ER). The active-site Proton acceptor is the cysteine 226. A substrate-binding site is contributed by 227–228 (GT).

This sequence belongs to the diaminopimelate epimerase family. In terms of assembly, homodimer.

Its subcellular location is the cytoplasm. The enzyme catalyses (2S,6S)-2,6-diaminopimelate = meso-2,6-diaminopimelate. It participates in amino-acid biosynthesis; L-lysine biosynthesis via DAP pathway; DL-2,6-diaminopimelate from LL-2,6-diaminopimelate: step 1/1. In terms of biological role, catalyzes the stereoinversion of LL-2,6-diaminopimelate (L,L-DAP) to meso-diaminopimelate (meso-DAP), a precursor of L-lysine and an essential component of the bacterial peptidoglycan. In Bacillus cereus (strain AH820), this protein is Diaminopimelate epimerase.